The sequence spans 260 residues: RxLR effector protein BLR38 (260 aa).

An N-terminal signal peptide occupies residues 1-18; the sequence is MHCTVFFLLIACAKSSYG. Positions 46-49 match the RxLR motif; the sequence is RLLR. The Nuclear localuization signal (NLS) motif lies at 136-148; the sequence is MPSSRKRPRALDE.

This sequence belongs to the RxLR effector family.

The protein resides in the secreted. Its subcellular location is the host nucleus. Secreted effector that triggers a robust hypersensitive response (HR) in Lactuca serriola LS102. The response to BLN06 was visible as strong necrosis. Although effector recognition is frequently associated with single dominant R gene loci, the recognition of BLR38 requires 2 unlinked loci that display incomplete dominance. The protein is RxLR effector protein BLR38 of Bremia lactucae (Lettuce downy mildew).